The primary structure comprises 132 residues: Two-component response regulator ORR42 (132 aa).

One can recognise a Response regulatory domain in the interval Arg-11–Ser-125. The residue at position 61 (Asp-61) is a 4-aspartylphosphate.

It belongs to the ARR family. Type-C subfamily. In terms of processing, two-component system major event consists of a His-to-Asp phosphorelay between a sensor histidine kinase (HK) and a response regulator (RR). In plants, the His-to-Asp phosphorelay involves an additional intermediate named Histidine-containing phosphotransfer protein (HPt). This multistep phosphorelay consists of a His-Asp-His-Asp sequential transfer of a phosphate group between first a His and an Asp of the HK protein, followed by the transfer to a conserved His of the HPt protein and finally the transfer to an Asp in the receiver domain of the RR protein.

Functionally, functions as a response regulator involved in His-to-Asp phosphorelay signal transduction system. Phosphorylation of the Asp residue in the receiver domain activates the ability of the protein to promote the transcription of target genes. May directly activate some type-A response regulators in response to cytokinins. In Oryza sativa subsp. japonica (Rice), this protein is Two-component response regulator ORR42.